Reading from the N-terminus, the 257-residue chain is tRNA (guanine-N(1)-)-methyltransferase (257 aa).

S-adenosyl-L-methionine-binding positions include Gly112 and 136–141 (LGDYVL).

It belongs to the RNA methyltransferase TrmD family. Homodimer.

The protein resides in the cytoplasm. It catalyses the reaction guanosine(37) in tRNA + S-adenosyl-L-methionine = N(1)-methylguanosine(37) in tRNA + S-adenosyl-L-homocysteine + H(+). Specifically methylates guanosine-37 in various tRNAs. This is tRNA (guanine-N(1)-)-methyltransferase from Salinispora tropica (strain ATCC BAA-916 / DSM 44818 / JCM 13857 / NBRC 105044 / CNB-440).